We begin with the raw amino-acid sequence, 134 residues long: Parvalbumin-like EF-hand-containing protein (134 aa).

EF-hand domains lie at 55–90 and 96–131; these read QLDDAIHTAFQSLDKDKSGFIEWNEIKYILSIIPSS and LTDEEAEAMIQAADTHGDGRINYEEFSELIKKEKIP. 9 residues coordinate Ca(2+): D68, D70, S72, F74, E76, E79, D109, D113, and E120.

Belongs to the parvalbumin family.

The protein is Parvalbumin-like EF-hand-containing protein of Homo sapiens (Human).